We begin with the raw amino-acid sequence, 59 residues long: Small ribosomal subunit protein bS21 (59 aa).

The tract at residues 36-59 is disordered; that stretch reads EHYEKPSVKRKKKAEAAKRNKSKF. Over residues 43-59 the composition is skewed to basic residues; sequence VKRKKKAEAAKRNKSKF.

This sequence belongs to the bacterial ribosomal protein bS21 family.

The protein is Small ribosomal subunit protein bS21 of Alkaliphilus oremlandii (strain OhILAs) (Clostridium oremlandii (strain OhILAs)).